The sequence spans 92 residues: Kinetoplastid membrane protein 11B (92 aa).

It belongs to the KMP-11 family. In terms of assembly, monomer.

The protein resides in the cytoplasm. The protein localises to the cytoskeleton. It localises to the cell projection. It is found in the cilium. Its subcellular location is the flagellum. May be involved in the regulation of the cytoskeleton through interaction with the subpellicular microtubules. May be involved in parasite mobility and attachment to the surface of the host cell. Behaves as a strong immunogen during infection. The sequence is that of Kinetoplastid membrane protein 11B (KMP-11B) from Leishmania infantum.